The following is a 481-amino-acid chain: Proline--tRNA ligase (481 aa).

The protein belongs to the class-II aminoacyl-tRNA synthetase family. ProS type 3 subfamily. In terms of assembly, homodimer.

It localises to the cytoplasm. The catalysed reaction is tRNA(Pro) + L-proline + ATP = L-prolyl-tRNA(Pro) + AMP + diphosphate. Catalyzes the attachment of proline to tRNA(Pro) in a two-step reaction: proline is first activated by ATP to form Pro-AMP and then transferred to the acceptor end of tRNA(Pro). In Chlorobaculum tepidum (strain ATCC 49652 / DSM 12025 / NBRC 103806 / TLS) (Chlorobium tepidum), this protein is Proline--tRNA ligase.